The sequence spans 347 residues: Twinfilin-2 (347 aa).

ADF-H domains follow at residues 3–137 (LVLV…RHIT) and 175–311 (GLAF…DEVH). A disordered region spans residues 314–347 (QHAHKQAFAKPRGPAGKRGNKRLIKGGGENGGNS). A compositionally biased stretch (gly residues) spans 338 to 347 (KGGGENGGNS).

It belongs to the actin-binding proteins ADF family. Twinfilin subfamily. Interacts with G-actin; ADP-actin form and capping protein (CP).

Its subcellular location is the cytoplasm. It is found in the cytoskeleton. The protein localises to the perinuclear region. Functionally, actin-binding protein involved in motile and morphological processes. Inhibits actin polymerization, likely by sequestering G-actin. This chain is Twinfilin-2 (twf2), found in Danio rerio (Zebrafish).